A 376-amino-acid chain; its full sequence is Formate dehydrogenase 1 (376 aa).

2 residues coordinate substrate: V97 and N121. NAD(+) contacts are provided by residues 176 to 177, D197, 244 to 248, T270, D296, and 325 to 328; these read RI, PLHKD, and HISG.

It belongs to the D-isomer specific 2-hydroxyacid dehydrogenase family. FDH subfamily. In terms of assembly, homodimer.

The protein localises to the cytoplasm. It carries out the reaction formate + NAD(+) = CO2 + NADH. Its function is as follows. Catalyzes the NAD(+)-dependent oxidation of formate to carbon dioxide. Formate oxidation is the final step in the methanol oxidation pathway in methylotrophic microorganisms. Has a role in the detoxification of exogenous formate in non-methylotrophic organisms. This is Formate dehydrogenase 1 (FDH1) from Saccharomyces cerevisiae (strain YJM789) (Baker's yeast).